Reading from the N-terminus, the 249-residue chain is tRNA (guanine-N(1)-)-methyltransferase (249 aa).

S-adenosyl-L-methionine is bound by residues G121 and 141 to 146; that span reads LGDFVL.

Belongs to the RNA methyltransferase TrmD family. In terms of assembly, homodimer.

The protein localises to the cytoplasm. The catalysed reaction is guanosine(37) in tRNA + S-adenosyl-L-methionine = N(1)-methylguanosine(37) in tRNA + S-adenosyl-L-homocysteine + H(+). Its function is as follows. Specifically methylates guanosine-37 in various tRNAs. This is tRNA (guanine-N(1)-)-methyltransferase from Cereibacter sphaeroides (strain KD131 / KCTC 12085) (Rhodobacter sphaeroides).